Reading from the N-terminus, the 448-residue chain is MAKKTSLFECQHCGFTSPKWLGKCVQCNAWESFIELNQTQKEVLNALKKPLPQVQKSVSIAEIEHEEVIKFSSTQSELDIVLGGGIAKGGLYLVGGSPGVGKSTLLLKVASGLAKNQQKVLYVSGEESLSQIKMRATRLDCIEEELYLLNEINWPVIKANMESENYFACVIDSIQTLYSPEISSAPGSISQVREITFELMRLAKTRDIAIFIIGHITKEGSIAGPRVLEHMVDSVLYFEGDPSRELRILRSFKNRFGPTSEIGLFEMKEQGLVSAKEASSLFFSKEEPMEGSAITITLEGSRALILEIQALVSECSFGAPKRLANGFDTNRLNMLIALLEKKLEIPLNRHDVFINVSGGIKISEPACDLAVIASILSSFKNRKIDNKTAFLGEVSLNGRILEAPNLNARLKEMENYGFLKAILPKKPSQKTSIKCYEANVVGKIVEWM.

A C4-type zinc finger spans residues 10 to 27 (CQHCGFTSPKWLGKCVQC). 96–103 (GSPGVGKS) contributes to the ATP binding site. Residues 253–257 (KNRFG) carry the RadA KNRFG motif motif. Positions 351-448 (DVFINVSGGI…NVVGKIVEWM (98 aa)) are lon-protease-like.

Belongs to the RecA family. RadA subfamily.

In terms of biological role, DNA-dependent ATPase involved in processing of recombination intermediates, plays a role in repairing DNA breaks. Stimulates the branch migration of RecA-mediated strand transfer reactions, allowing the 3' invading strand to extend heteroduplex DNA faster. Binds ssDNA in the presence of ADP but not other nucleotides, has ATPase activity that is stimulated by ssDNA and various branched DNA structures, but inhibited by SSB. Does not have RecA's homology-searching function. The polypeptide is DNA repair protein RadA (Helicobacter pylori (strain J99 / ATCC 700824) (Campylobacter pylori J99)).